The primary structure comprises 654 residues: Endoplasmic reticulum chaperone BiP (654 aa).

Positions 1 to 18 (MKLSLVAAVLLLLCAARA) are cleaved as a signal peptide. The required for interaction with ELAPOR1 stretch occupies residues 1 to 80 (MKLSLVAAVL…EGERLIGDAA (80 aa)). 36–39 (GTTY) serves as a coordination point for ATP. S86 carries the post-translational modification Phosphoserine. K96 contributes to the ATP binding site. Residue K125 is modified to N6-acetyllysine. Residues 125–280 (KPYIQVDIGG…KKKTGKDVRK (156 aa)) are nucleotide-binding (NBD). Y160 carries the 3'-nitrotyrosine modification. K213 carries the post-translational modification N6-acetyllysine. 227–229 (GGT) lines the ATP pocket. Residue K271 is modified to N6-acetyllysine. Residue 293–300 (EKAKRALS) coordinates ATP. At K326 the chain carries N6-acetyllysine. K352 is covalently cross-linked (Glycyl lysine isopeptide (Lys-Gly) (interchain with G-Cter in SUMO2)). Residue K353 is modified to N6-acetyllysine; alternate. A Glycyl lysine isopeptide (Lys-Gly) (interchain with G-Cter in SUMO1); alternate cross-link involves residue K353. Position 364–367 (364–367 (GSTR)) interacts with ATP. The interdomain linker stretch occupies residues 409–419 (QDTGDLVLLDV). A substrate-binding (SBD) region spans residues 420-500 (CPLTLGIETV…PRGVPQIEVT (81 aa)). K447 carries the post-translational modification N6-succinyllysine. R492 carries the omega-N-methylarginine modification. T518 carries the post-translational modification O-AMP-threonine; alternate. T518 carries the phosphothreonine; alternate modification. K585 bears the N6,N6,N6-trimethyllysine; by METTL21A; in vitro mark. Position 585 is an N6,N6-dimethyllysine; alternate (K585). K585 carries the N6-methyllysine; alternate modification. K591 is modified (N6-methyllysine). A disordered region spans residues 632 to 654 (SKLYGSAGPPPTGEEDTSERDEL). Phosphothreonine is present on residues T643 and T648. The segment covering 644 to 654 (GEEDTSERDEL) has biased composition (acidic residues). Residue S649 is modified to Phosphoserine. The Prevents secretion from ER signature appears at 651 to 654 (RDEL).

Belongs to the heat shock protein 70 family. In terms of assembly, monomer and homooligomer; homooligomerization via the interdomain linker inactivates the chaperone activity and acts as a storage of HSPA5/BiP molecules. Interacts with DNAJC1 (via J domain). Component of an EIF2 complex at least composed of CELF1/CUGBP1, CALR, CALR3, EIF2S1, EIF2S2, HSP90B1 and HSPA5. Part of a large chaperone multiprotein complex comprising DNAJB11, HSP90B1, HSPA5, HYOU, PDIA2, PDIA4, PDIA6, PPIB, SDF2L1, UGGT1 and very small amounts of ERP29, but not, or at very low levels, CALR nor CANX. Interacts with TMEM132A and TRIM21. May form a complex with ERLEC1, OS9, SEL1L and SYVN1. Interacts with DNAJC10. Interacts with DNAJB9/ERdj4; leading to recruit HSPA5/BiP to ERN1/IRE1. Interacts with ERN1/IRE1 (via luminal domain); the interaction takes place following interaction with DNAJB9/ERdj4 and leads to inactivate ERN1/IRE1, the interaction also competitively inhibits ERN1 interaction with MANF. Interacts directly with MANF (via SAP domain); the interaction inhibits ATP binding to HSPA5/BiP and subsequent nucleotide exchange. Interacts with EIF2AK3/PERK (via luminal domain); interaction leads to inactivate EIF2AK3/PERK. Interacts with MX1. Interacts with METTL23. Interacts with CEMIP; the interaction induces calcium leakage from the endoplasmic reticulum and cell migration. Interacts with PCSK4 form; the interaction takes place in the endoplasmic reticulum. Interacts with CIPC. Interacts with CCDC88B (via C-terminus); the interaction opposes ERN1-mediated JNK activation, protecting against apoptosis. Interacts with INPP5K; necessary for INPP5K localization at the endoplasmic reticulum. Interacts with MANF; the interaction is direct. Interacts with LOXL2; leading to activate the ERN1/IRE1-XBP1 pathway of the unfolded protein response. Interacts with CLU under stressed condition; interaction increases CLU protein stability; facilitates its retrotranslocation and redistribution to the mitochondria; cooperatively suppress stress-induced apoptosis by stabilizing mitochondrial membrane integrity. Interacts with CCDC47. Interacts with CLN3. Interacts with ELAPOR1; may regulate the function of HSPA5 in apoptosis and cell proliferation. Interacts with CASP7. Interacts with ILDR2; the interaction stabilizes ILDR2 expression. Interacts with ADAM7. Post-translationally, in unstressed cells, AMPylation at Thr-518 by FICD inactivates the chaperome activity: AMPylated form is locked in a relatively inert state and only weakly stimulated by J domain-containing proteins. In response to endoplasmic reticulum stress, de-AMPylation by the same protein, FICD, restores the chaperone activity.

It localises to the endoplasmic reticulum lumen. The protein resides in the melanosome. It is found in the cytoplasm. The protein localises to the cell surface. The enzyme catalyses ATP + H2O = ADP + phosphate + H(+). With respect to regulation, the chaperone activity is regulated by ATP-induced allosteric coupling of the nucleotide-binding (NBD) and substrate-binding (SBD) domains. In the ADP-bound and nucleotide-free (apo) states, the two domains have little interaction. In contrast, in the ATP-bound state the two domains are tightly coupled, which results in drastically accelerated kinetics in both binding and release of polypeptide substrates. J domain-containing co-chaperones (DNAJB9/ERdj4 or DNAJC10/ERdj5) stimulate the ATPase activity and are required for efficient substrate recognition by HSPA5/BiP. Homooligomerization inactivates participating HSPA5/BiP protomers and probably act as reservoirs to store HSPA5/BiP molecules when they are not needed by the cell. Functionally, endoplasmic reticulum chaperone that plays a key role in protein folding and quality control in the endoplasmic reticulum lumen. Involved in the correct folding of proteins and degradation of misfolded proteins via its interaction with DNAJC10/ERdj5, probably to facilitate the release of DNAJC10/ERdj5 from its substrate. Acts as a key repressor of the EIF2AK3/PERK and ERN1/IRE1-mediated unfolded protein response (UPR). In the unstressed endoplasmic reticulum, recruited by DNAJB9/ERdj4 to the luminal region of ERN1/IRE1, leading to disrupt the dimerization of ERN1/IRE1, thereby inactivating ERN1/IRE1. Also binds and inactivates EIF2AK3/PERK in unstressed cells. Accumulation of misfolded protein in the endoplasmic reticulum causes release of HSPA5/BiP from ERN1/IRE1 and EIF2AK3/PERK, allowing their homodimerization and subsequent activation. Plays an auxiliary role in post-translational transport of small presecretory proteins across endoplasmic reticulum (ER). May function as an allosteric modulator for SEC61 channel-forming translocon complex, likely cooperating with SEC62 to enable the productive insertion of these precursors into SEC61 channel. Appears to specifically regulate translocation of precursors having inhibitory residues in their mature region that weaken channel gating. May also play a role in apoptosis and cell proliferation. This Ictidomys tridecemlineatus (Thirteen-lined ground squirrel) protein is Endoplasmic reticulum chaperone BiP.